The primary structure comprises 492 residues: Sestrin-3 (492 aa).

Positions 62–243 (LVEEYSTSGR…VCDLANDNSI (182 aa)) are N-terminal domain; may mediate the alkylhydroperoxide reductase activity. Residue Cys121 is the Cysteine sulfenic acid (-SOH) intermediate of the active site. The tract at residues 310 to 492 (PHSDFEDDVI…ALRAITRHLT (183 aa)) is C-terminal domain; mediates TORC1 regulation. L-leucine is bound by residues 386–389 (TYNT), Thr398, and Glu463.

Belongs to the sestrin family. Interacts with the GATOR2 complex which is composed of MIOS, SEC13, SEH1L, WDR24 and WDR59; the interaction is not regulated by leucine. Interacts with RRAGA, RRAGB, RRAGC and RRAGD; may function as a guanine nucleotide dissociation inhibitor for RRAGs and regulate them. Interacts with the TORC2 complex; through RICTOR. Detected in liver and skeletal muscles.

The protein resides in the cytoplasm. It carries out the reaction a hydroperoxide + L-cysteinyl-[protein] = S-hydroxy-L-cysteinyl-[protein] + an alcohol. In terms of biological role, may function as an intracellular leucine sensor that negatively regulates the TORC1 signaling pathway. May also regulate the insulin-receptor signaling pathway through activation of TORC2. This metabolic regulator may also play a role in protection against oxidative and genotoxic stresses. May prevent the accumulation of reactive oxygen species (ROS) through the alkylhydroperoxide reductase activity born by the N-terminal domain of the protein. This Mus musculus (Mouse) protein is Sestrin-3.